The chain runs to 503 residues: Cytochrome P450 monooxygenase lnbC (503 aa).

The chain crosses the membrane as a helical span at residues 14–34 (VVLLLSSVWIAVHLVLAAYNV). N-linked (GlcNAc...) asparagine glycosylation is found at Asn94 and Asn169. Cys446 is a heme binding site.

Belongs to the cytochrome P450 family. Requires heme as cofactor.

The protein localises to the membrane. It participates in secondary metabolite biosynthesis. Its function is as follows. Cytochrome P450 monooxygenase; part of the lnb gene cluster that mediates the biosynthesis of diastereomeric piperazines. Lna and lnb clusters encode sets of enzymes that produce overlapping sets of previously undescribed metabolites such as piperazinomycin-like metabolites or morpholine. The lna and lnb biosynthetic pathways appear to be part of a signaling network that controls the formation of sclerotia, a resilient overwintering structure. One primary function of the non-canonical nonribosomal peptide synthetases lnaA and lnbA consists in the reduction of L-tyrosine. The presence in the clusters of tailoring enzymes such as the oxidoreductases lnaB, lnbB, lnaE or lnbE, as well as of the cytochrome P450 monooxygenases lnaC, lnaD, or lnbC, might explain formation of various diastereomeric piperazines. The protein is Cytochrome P450 monooxygenase lnbC of Aspergillus flavus (strain ATCC 200026 / FGSC A1120 / IAM 13836 / NRRL 3357 / JCM 12722 / SRRC 167).